The chain runs to 401 residues: MHIKTLTVSQLNRYVKNTLDADFILNNASVKGEISNLKIHSSGHIYFSLKDGGSKINCVMFKSYAYNLKFAPENGMDVVALGNVSVYEKEGSYQLYVKDMKREGIGDLYVAFEKLKEKLKEEGLFDDVHKKEIPKFSKKVGVITSPTGAALKDIINVTKRRNKGIELLIYPALVQGTDASRTLIEGIKILNKVEDVDIIILARGGGSIEELWAFNNEELAYAVYNSKKPIITGVGHETDFTIVDFVSDRRAPTPSAAAEIAVFDREVLINEILNYKYNIKNYMENIIKEKRNYLNLYKQKIEANSPTNIIVNEYKNIDNLKELLNMKIEGKLNKEKNNLSRLSSLLEAHNPLNVLKKGYTLIEDEGNNLITEKEALKELNKINIIFKDGRAKLSIEYIEEF.

It belongs to the XseA family. As to quaternary structure, heterooligomer composed of large and small subunits.

It is found in the cytoplasm. It carries out the reaction Exonucleolytic cleavage in either 5'- to 3'- or 3'- to 5'-direction to yield nucleoside 5'-phosphates.. In terms of biological role, bidirectionally degrades single-stranded DNA into large acid-insoluble oligonucleotides, which are then degraded further into small acid-soluble oligonucleotides. The protein is Exodeoxyribonuclease 7 large subunit of Clostridium botulinum (strain Hall / ATCC 3502 / NCTC 13319 / Type A).